Reading from the N-terminus, the 269-residue chain is Cytochrome c oxidase subunit 3 (269 aa).

Topologically, residues 1-22 (MTHLERSRHQQHPFHMVMPSPW) are mitochondrial matrix. The chain crosses the membrane as a helical span at residues 23 to 41 (PIVVSFALLSLALSTALTM). The Mitochondrial intermembrane segment spans residues 42–48 (HGYIGNM). Residues 49-73 (NMVYLALFVLLTSSILWFRDIVAEA) traverse the membrane as a helical segment. The Mitochondrial matrix portion of the chain corresponds to 74-80 (TYLGDHT). Residues 81–114 (MAVRKGINLGFLMFVLSEVLIFAGLFWAYFHSAM) form a helical membrane-spanning segment. Over 115–137 (SPDVTLGACWPPVGIEAVQPTEL) the chain is Mitochondrial intermembrane. The helical transmembrane segment at 138–161 (PLLNTIILLSSGATVTYSHHALIA) threads the bilayer. At 162 to 164 (GNR) the chain is on the mitochondrial matrix side. The chain crosses the membrane as a helical span at residues 165–188 (NKALSGLLITFWLIVIFVTCQYIE). Topologically, residues 189–201 (YTNAAFTISDGVY) are mitochondrial intermembrane. The chain crosses the membrane as a helical span at residues 202-230 (GSVFYAGTGLHFLHMVMLAAMLGVNYWRM). At 231 to 248 (RNYHLTAGHHVGYETTII) the chain is on the mitochondrial matrix side. The helical transmembrane segment at 249 to 265 (YTHVLDVIWLFLYVVFY) threads the bilayer. The Mitochondrial intermembrane portion of the chain corresponds to 266-269 (WWGV).

The protein belongs to the cytochrome c oxidase subunit 3 family. Component of the cytochrome c oxidase (complex IV, CIV), a multisubunit enzyme composed of 12 subunits. The complex is composed of a catalytic core of 3 subunits COX1, COX2 and COX3, encoded in the mitochondrial DNA, and 9 supernumerary subunits COX4, COX5A (or COX5B), COX6, COX7, COX8, COX9, COX12, COX13 and COX26, which are encoded in the nuclear genome. The complex exists as a monomer or a dimer and forms supercomplexes (SCs) in the inner mitochondrial membrane with a dimer of ubiquinol-cytochrome c oxidoreductase (cytochrome b-c1 complex, complex III, CIII), resulting in 2 different assemblies (supercomplexes III(2)IV and III(2)IV(2)). In terms of processing, the N-terminus is blocked.

The protein resides in the mitochondrion inner membrane. It catalyses the reaction 4 Fe(II)-[cytochrome c] + O2 + 8 H(+)(in) = 4 Fe(III)-[cytochrome c] + 2 H2O + 4 H(+)(out). Component of the cytochrome c oxidase, the last enzyme in the mitochondrial electron transport chain which drives oxidative phosphorylation. The respiratory chain contains 3 multisubunit complexes succinate dehydrogenase (complex II, CII), ubiquinol-cytochrome c oxidoreductase (cytochrome b-c1 complex, complex III, CIII) and cytochrome c oxidase (complex IV, CIV), that cooperate to transfer electrons derived from NADH and succinate to molecular oxygen, creating an electrochemical gradient over the inner membrane that drives transmembrane transport and the ATP synthase. Cytochrome c oxidase is the component of the respiratory chain that catalyzes the reduction of oxygen to water. Electrons originating from reduced cytochrome c in the intermembrane space (IMS) are transferred via the dinuclear copper A center (CU(A)) of COX2 and heme A of COX1 to the active site in COX1, a binuclear center (BNC) formed by heme A3 and copper B (CU(B)). The BNC reduces molecular oxygen to 2 water molecules using 4 electrons from cytochrome c in the IMS and 4 protons from the mitochondrial matrix. COX3 is a catalytic core subunit. In Saccharomyces cerevisiae (strain ATCC 204508 / S288c) (Baker's yeast), this protein is Cytochrome c oxidase subunit 3 (COX3).